A 384-amino-acid polypeptide reads, in one-letter code: Actin-binding Rho-activating protein (384 aa).

The span at 1–11 shows a compositional bias: basic and acidic residues; that stretch reads MARGEKGRGEG. Disordered regions lie at residues 1–20, 32–159, and 181–211; these read MARG…LRKV, GWQQ…SPTR, and EQEE…EQDG. A compositionally biased stretch (polar residues) spans 35-47; sequence QWANENSTRQAQE. Residues 134–145 are compositionally biased toward acidic residues; the sequence is DGDEPEPEQPES. Ser-156 and Ser-191 each carry phosphoserine. Actin-binding regions lie at residues 202–302 and 303–384; these read ETEE…AERA and KRAE…TLLK. 2 interaction with actin regions span residues 243–288 and 355–384; these read SQVG…GDEG and MRAR…TLLK.

As to quaternary structure, binds F-actin and ABLIM1, ABLIM2 and ABLIM3. Interaction with ABLIM2 and ABLIM3 enhances activity. As to expression, specifically expressed in heart and skeletal muscles.

It localises to the cytoplasm. The protein resides in the myofibril. The protein localises to the sarcomere. Its subcellular location is the cytoskeleton. Its function is as follows. Acts as an activator of serum response factor (SRF)-dependent transcription possibly by inducing nuclear translocation of MKL1 or MKL2 and through a mechanism requiring Rho-actin signaling. The chain is Actin-binding Rho-activating protein (ABRA) from Sus scrofa (Pig).